Here is a 135-residue protein sequence, read N- to C-terminus: Gene 52 protein (135 aa).

2 disordered regions span residues 1–20 and 110–135; these read MASG…PTPE and LGGR…AEKQ. Over residues 122–135 the composition is skewed to basic residues; sequence SKPRGRSKHRAEKQ.

Belongs to the herpesviridae BLRF2 family.

This chain is Gene 52 protein (52), found in Equine herpesvirus 2 (strain 86/87) (EHV-2).